A 422-amino-acid polypeptide reads, in one-letter code: Tyrosine--tRNA ligase (422 aa).

Tyrosine 36 lines the L-tyrosine pocket. Residues 41 to 50 carry the 'HIGH' region motif; the sequence is PTADSLHIGH. 2 residues coordinate L-tyrosine: tyrosine 175 and glutamine 179. The 'KMSKS' region motif lies at 235–239; that stretch reads KFGKT. Residue lysine 238 participates in ATP binding. Residues 354–411 form the S4 RNA-binding domain; it reads TSLQEALTKSKLATSRSQARYFIKSNAITINAHKQSKIEYIFQDSDRIYNLYTLLKRG.

Belongs to the class-I aminoacyl-tRNA synthetase family. TyrS type 1 subfamily. Homodimer.

It localises to the cytoplasm. The enzyme catalyses tRNA(Tyr) + L-tyrosine + ATP = L-tyrosyl-tRNA(Tyr) + AMP + diphosphate + H(+). In terms of biological role, catalyzes the attachment of tyrosine to tRNA(Tyr) in a two-step reaction: tyrosine is first activated by ATP to form Tyr-AMP and then transferred to the acceptor end of tRNA(Tyr). The chain is Tyrosine--tRNA ligase from Blochmanniella floridana.